The primary structure comprises 184 residues: Large ribosomal subunit protein uL6 (184 aa).

Belongs to the universal ribosomal protein uL6 family. Part of the 50S ribosomal subunit.

In terms of biological role, this protein binds to the 23S rRNA, and is important in its secondary structure. It is located near the subunit interface in the base of the L7/L12 stalk, and near the tRNA binding site of the peptidyltransferase center. This chain is Large ribosomal subunit protein uL6, found in Thermomicrobium roseum (strain ATCC 27502 / DSM 5159 / P-2).